Here is a 72-residue protein sequence, read N- to C-terminus: Thiostrepton (72 aa).

The propeptide occupies 1-55 (MDATAIHERWSVMSNASIGQEIGVEGLTGLDVDALEISDYVDETLLDGEDLTVTM). The 4-(1-hydroxyethyl)-7-isoleucino-2-(threonin-O3-ylcarbonyl)-7,8-dihydroquinolin-8-ol (Ile-Thr) cross-link spans 56–67 (IASASCTTCICT). S58 carries the 2,3-didehydroalanine (Ser) modification. Residues 60 to 61 (SC) constitute a cross-link (thiazole-4-carboxylic acid (Ser-Cys)). The 5-amino-piperideine-2,5-dicarboxylic acid (Ser-Cys) (with S-69) cross-link spans 60–68 (SCTTCICTC). A cross-link (5-amino-piperideine-2,5-dicarboxylic acid (Ser-Ser) (with C-68)) is located at residues 60–69 (SCTTCICTCS). Residue T63 is modified to (Z)-2,3-didehydrobutyrine. Residues 63-64 (TC) constitute a cross-link ((4S)-thiazoline-4-carboxylic acid (Thr-Cys)). I65 carries the (3S,4R)-3,4-dihydroxyisoleucine modification. The segment at residues 65–66 (IC) is a cross-link (thiazole-4-carboxylic acid (Ile-Cys)). The thiazole-4-carboxylic acid (Thr-Cys) cross-link spans 67-68 (TC). Positions 69-70 (SC) form a cross-link, thiazole-4-carboxylic acid (Ser-Cys). 2 positions are modified to 2,3-didehydroalanine (Ser): S71 and S72. Serine amide is present on S72.

This sequence belongs to the thiocillin family. Maturation of thiazole and oxazole containing antibiotics involves the enzymatic condensation of a Cys, Ser or Thr with the alpha-carbonyl of the preceding amino acid to form a thioether or ether bond, then dehydration to form a double bond with the alpha-amino nitrogen. Thiazoline or oxazoline ring are dehydrogenated to form thiazole or oxazole rings. Post-translationally, maturation of pyridinyl containing antibiotics involves the cross-linking of a Ser and a Cys-Ser pair usually separated by 7 or 8 residues along the peptide chain. The Ser residues are dehydrated to didehydroalanines, then bonded between their beta carbons. The alpha carbonyl of the Cys condenses with alpha carbon of the first Ser to form a pyridinyl ring. The ring may be multiply dehydrogenated to form a pyridine ring with loss of the amino nitrogen of the first Ser. In terms of processing, the amidation of Ser-72 probably does not occur by the same mechanism, oxidative cleavage of glycine, as in eukaryotes. The structure of the 2,3-didehydrobutyrin is shown to be Z-isomer.

The protein resides in the secreted. Its function is as follows. Has bacteriocidal activity. Inhibits bacterial protein biosynthesis by acting on the elongation factor Tu (EF-Tu). This chain is Thiostrepton (tpdA), found in Streptomyces azureus.